Consider the following 640-residue polypeptide: Kelch-like protein 17 (640 aa).

Residues 1–50 are disordered; the sequence is MQPRGERPAGRTQSPEHSSPGPGPEAPPPPQPPAPEAERARPRQARPAAP. Over residues 21–35 the composition is skewed to pro residues; it reads GPGPEAPPPPQPPAP. The region spanning 90–157 is the BTB domain; sequence CDIVLHVAAK…AYTAEIVVGE (68 aa). The region spanning 192 to 294 is the BACK domain; it reads CLGIRGFADT…SRDFLLGHVD (103 aa). The segment at 287-639 is interaction with F-actin; it reads DFLLGHVDAE…SPTLSVSSTS (353 aa). 6 Kelch repeats span residues 341 to 387, 388 to 434, 436 to 481, 482 to 528, 530 to 575, and 576 to 622; these read VLFA…AVGN, RLYA…ALHG, LYAA…TLDG, NLYA…VLEG, LYVA…AMDG, and WLYA…VLEL. The tract at residues 638–640 is interaction with PDZK1; it reads TSL.

In terms of assembly, interacts with F-actin; the interaction disrupts the F-actin structures and leads to marked changes of neuronal morphology. Component of a complex, composed of PDZK1, SYNGAP1, KLHL17 and NMDA receptors. Interacts directly with PDZK1 (via PDZ1 domain); the interaction is important for integrity of actin cytoskeleton structures in neurons. Interacts with DLG4 and SYNGAP1. Interacts (via kelch repeats) with GRIK2 (via C-terminus); the interaction targets GRIK2 for degradation via ubiquitin-proteasome pathway. Interacts with GRIK1. Interacts with (via BTB domain) CUL3; the interaction regulates surface GRIK2 expression.

The protein localises to the postsynaptic density. The protein resides in the synapse. The protein operates within protein modification; protein ubiquitination. Its function is as follows. Substrate-recognition component of some cullin-RING-based BCR (BTB-CUL3-RBX1) E3 ubiquitin-protein ligase complexes. The BCR(KLHL17) complex mediates the ubiquitination and subsequent degradation of GLUR6. May play a role in the actin-based neuronal function. The chain is Kelch-like protein 17 (Klhl17) from Mus musculus (Mouse).